We begin with the raw amino-acid sequence, 207 residues long: CASP-like protein 1D1 (207 aa).

Over 1-40 the chain is Cytoplasmic; the sequence is MATVDGTTAPSSGGKTATVALESGGGRYGGPAPAKCSGAN. The chain crosses the membrane as a helical span at residues 41-61; it reads LALRALLFAVSLSALVVLVTA. Residues 62–89 lie on the Extracellular side of the membrane; the sequence is KQTVMVPFVIRPPQFILAPVPAKYTHSP. The chain crosses the membrane as a helical span at residues 90 to 110; that stretch reads ALIYLLAALCATCFYSLITAI. Residues 111–124 lie on the Cytoplasmic side of the membrane; that stretch reads SSVRLLSSSACSAK. Residues 125-145 form a helical membrane-spanning segment; the sequence is TLFYLILLDVFYAAVMASATG. The Extracellular portion of the chain corresponds to 146–176; that stretch reads TAGAVAWVGLKGNSHTRWNKICNVYGKFCRH. Residues 177–197 form a helical membrane-spanning segment; it reads IGSSTFLALIAAIVLVLLAFL. At 198 to 207 the chain is on the cytoplasmic side; it reads NAYSLYRRSR.

Belongs to the Casparian strip membrane proteins (CASP) family. As to quaternary structure, homodimer and heterodimers.

It is found in the cell membrane. The protein is CASP-like protein 1D1 of Oryza sativa subsp. japonica (Rice).